The primary structure comprises 993 residues: Serine/threonine-protein phosphatase 6 regulatory ankyrin repeat subunit B (993 aa).

ANK repeat units follow at residues 7–36 (TDQPPLVQAIFSGDPEEIRMLIHKTEDVNT), 40–69 (EKRTPLHVAAFLGDAEIIELLILSGARVNA), 73–102 (MWLTPLHRAVASRSEEAVQVLIKHSADVNA), 106–135 (NWQTPLHVAAANKAVKCAEVIIPLLSSVNV), 139–168 (GGRTALHHAALNGHVEMVNLLLAKGANINA), 172–201 (KDRRALHWAAYMGHLDVVALLINHGAEVTC), 205–234 (KGYTPLHAAASNGQINVVKHLLNLGVEIDE), 238–267 (YGNTALHIACYNGQDAVVNELIDYGANVNQ), 271–301 (NGFTPLHFAAASTHGALCLELLVNNGADVNI), 305–334 (DGKSPLHMTAVHGRFTRSQTLIQNGGEIDC), 338–367 (DGNTPLHVAARYGHELLINTLITSGADTAK), 371–400 (HSMFPLHLAALNAHSDCCRKLLSSGFEIDT), 404–433 (FGRTCLHAAAAGGNVECIKLLQSSGADFHK), 437–466 (CGRTPLHYAAANCHFHCIETLVTTGANVNE), 470–498 (WGRTALHYAAASDMDRNKTILGNAHDNSE), 531–561 (EGYNSIHYAAAYGHRQCLELLLERTNSGFEE), 566–595 (ATKSPLHLAAYNGHHQALEVLLQSLVDLDI), 599–628 (KGRTALDLAAFKGHTECVEALINQGASIFV), 633–662 (TKRTPLHASVINGHTLCLRLLLEIADNPEA), 669–698 (KGQTPLMLAVAYGHIDAVSLLLEKEANVDT), 702–731 (LGCTALHRGIMTGHEECVQMLLEQEVSILC), 735–764 (RGRTPLHYAAARGHATWLSELLQMALSEED), 771–800 (QGYTPLHWACYNGNENCIEVLLEQKCFRKF), 803–832 (NPFTPLHCAIINDHGNCASLLLGAIDSSIV), 838–867 (KGRTPLHAAAFADHVECLQLLLRHSAPVNA), 871–901 (SGKTALMMAAENGQAGAVDILVNSAQADLTV), 905–934 (DLNTPLHLACSKGHEKCALLILDKIQDESL), and 941–970 (ALQTPLHVAARNGLKVVVEELLAKGACVLA).

As to quaternary structure, protein phosphatase 6 (PP6) holoenzyme is proposed to be a heterotrimeric complex formed by the catalytic subunit, a SAPS domain-containing subunit (PP6R) and an ankyrin repeat-domain containing regulatory subunit (ARS). Interacts with PPP6R1.

In terms of biological role, putative regulatory subunit of protein phosphatase 6 (PP6) that may be involved in the recognition of phosphoprotein substrates. This Homo sapiens (Human) protein is Serine/threonine-protein phosphatase 6 regulatory ankyrin repeat subunit B (ANKRD44).